The following is a 175-amino-acid chain: Adenine phosphoribosyltransferase (175 aa).

It belongs to the purine/pyrimidine phosphoribosyltransferase family. As to quaternary structure, homodimer.

It localises to the cytoplasm. It carries out the reaction AMP + diphosphate = 5-phospho-alpha-D-ribose 1-diphosphate + adenine. The protein operates within purine metabolism; AMP biosynthesis via salvage pathway; AMP from adenine: step 1/1. In terms of biological role, catalyzes a salvage reaction resulting in the formation of AMP, that is energically less costly than de novo synthesis. This is Adenine phosphoribosyltransferase from Francisella tularensis subsp. tularensis (strain FSC 198).